We begin with the raw amino-acid sequence, 255 residues long: 5'-nucleotidase SurE (255 aa).

The a divalent metal cation site is built by aspartate 8, aspartate 9, serine 39, and asparagine 91.

It belongs to the SurE nucleotidase family. It depends on a divalent metal cation as a cofactor.

Its subcellular location is the cytoplasm. It carries out the reaction a ribonucleoside 5'-phosphate + H2O = a ribonucleoside + phosphate. Nucleotidase that shows phosphatase activity on nucleoside 5'-monophosphates. In Nitrosospira multiformis (strain ATCC 25196 / NCIMB 11849 / C 71), this protein is 5'-nucleotidase SurE.